The sequence spans 139 residues: Large ribosomal subunit protein uL16c (139 aa).

It belongs to the universal ribosomal protein uL16 family. In terms of assembly, part of the 50S ribosomal subunit.

The protein localises to the plastid. It is found in the chloroplast. The protein is Large ribosomal subunit protein uL16c of Cicer arietinum (Chickpea).